Consider the following 448-residue polypeptide: Adenylosuccinate synthetase (448 aa).

GTP is bound by residues 36–42 (GDEGKGK) and 64–66 (GHT). Aspartate 37 serves as the catalytic Proton acceptor. Mg(2+) contacts are provided by aspartate 37 and glycine 64. Residues 37–40 (DEGK), 62–65 (NAGH), threonine 154, arginine 168, asparagine 246, threonine 261, and arginine 325 each bind IMP. Catalysis depends on histidine 65, which acts as the Proton donor. Residue 321 to 327 (VTTKRKR) participates in substrate binding. Residues arginine 327, 353–355 (KLD), and 436–438 (GVG) each bind GTP.

This sequence belongs to the adenylosuccinate synthetase family. Homodimer. Mg(2+) serves as cofactor.

The protein localises to the cytoplasm. It catalyses the reaction IMP + L-aspartate + GTP = N(6)-(1,2-dicarboxyethyl)-AMP + GDP + phosphate + 2 H(+). It participates in purine metabolism; AMP biosynthesis via de novo pathway; AMP from IMP: step 1/2. Plays an important role in the de novo pathway and in the salvage pathway of purine nucleotide biosynthesis. Catalyzes the first committed step in the biosynthesis of AMP from IMP. The chain is Adenylosuccinate synthetase from Drosophila ananassae (Fruit fly).